A 169-amino-acid polypeptide reads, in one-letter code: MKKWMLAICLMFINEICQATDCFDLAGRDYKIDPDLLRAISWKESRYRVNAIGINPVTGYGSGLMQVDSQHFNELARYGIKPEHLTTDPCMNIYTGAYYLAIAFKKWGVTWEAVGAYNAGFRKSERQNQRRLAYASEVYRIYTGIKSSKGIRLPATKKSLPEINSVQNN.

It belongs to the IagB/IpgF/P19 family.

This Escherichia coli protein is X polypeptide (X).